The chain runs to 344 residues: Mitochondrial mRNA pseudouridine synthase RPUSD3 (344 aa).

A mitochondrion-targeting transit peptide spans 1–41 (MGGWRVLGQASGGWRRGLGIRATSTAAGFGTKARHQLQRRG). The interval 29 to 59 (FGTKARHQLQRRGASKPSDPPGDQPFPGLLR) is disordered. The span at 32–42 (KARHQLQRRGA) shows a compositional bias: basic residues. At S64 the chain carries Phosphoserine.

This sequence belongs to the pseudouridine synthase RluA family. In terms of assembly, forms a regulatory protein-RNA complex, consisting of RCC1L, NGRN, RPUSD3, RPUSD4, TRUB2, FASTKD2 and 16S mt-rRNA.

It localises to the mitochondrion matrix. The catalysed reaction is a uridine in mRNA = a pseudouridine in mRNA. In terms of biological role, catalyzes uridine to pseudouridine isomerization (pseudouridylation) of specific mitochondrial mRNAs (mt-mRNAs), a post-transcriptional modification necessary for their translation. Acts at position 390 in COXI mt-mRNA and at position 697-699 in mitochondrial COXIII mt-mRNA. As a component of a functional protein-RNA module, consisting of RCC1L, NGRN, RPUSD3, RPUSD4, TRUB2, FASTKD2 and 16S mitochondrial ribosomal RNA (16S mt-rRNA), controls 16S mt-rRNA abundance and may play a role in mitochondrial ribosome biogenesis. This Bos taurus (Bovine) protein is Mitochondrial mRNA pseudouridine synthase RPUSD3 (RPUSD3).